Consider the following 225-residue polypeptide: C-reactive protein (225 aa).

The first 19 residues, 1–19 (MAKLLLYFLLLTSLSDVFG), serve as a signal peptide directing secretion. The 202-residue stretch at 24–225 (SKKTFVFPKE…EVFIKPQLWP (202 aa)) folds into the Pentraxin (PTX) domain. C55 and C116 are oxidised to a cystine. Positions 80, 158, 159, and 169 each coordinate Ca(2+).

Belongs to the pentraxin family. Homopentamer. Pentraxin (or pentaxin) have a discoid arrangement of 5 non-covalently bound subunits. Interacts with FCN1; may regulate monocyte activation by FCN1. Ca(2+) serves as cofactor. In terms of tissue distribution, found in plasma.

The protein localises to the secreted. Its function is as follows. Displays several functions associated with host defense: it promotes agglutination, bacterial capsular swelling, phagocytosis and complement fixation through its calcium-dependent binding to phosphorylcholine. Can interact with DNA and histones and may scavenge nuclear material released from damaged circulating cells. This chain is C-reactive protein (CRP), found in Cavia porcellus (Guinea pig).